Reading from the N-terminus, the 679-residue chain is Leucine-rich repeat, immunoglobulin-like domain and transmembrane domain-containing protein 3 (679 aa).

Residues 1–19 form the signal peptide; it reads MHLFACLCIVLSFLEGVGC. The Lumenal portion of the chain corresponds to 20–582; sequence LCPSQCTCDY…RVEGDDSQWS (563 aa). LRR repeat units follow at residues 56–79, 80–103, 104–128, 129–151, and 152–175; these read PVDT…AFYY, LVEL…SFYN, LKQL…LLDM, PLLR…ALRY, and LKNL…FLES. The 53-residue stretch at 201 to 253 folds into the LRRCT domain; the sequence is NPWFCDCHISKMIELSKVVDPAIVLLDPLMTCSEPERLTGILFQRAELEHCLK. The Ig-like domain maps to 254-344; the sequence is PSVMTSATKI…GMSEAVVTVT (91 aa). The cysteines at positions 275 and 328 are disulfide-linked. N-linked (GlcNAc...) asparagine glycosylation is present at Asn296. The disordered stretch occupies residues 351 to 375; it reads TPIPPDTSERTGDHPEWDVQPGSGR. The span at 357–367 shows a compositional bias: basic and acidic residues; the sequence is TSERTGDHPEW. One can recognise a Fibronectin type-III domain in the interval 486 to 574; the sequence is AIENLRVVSE…QCITFSTERV (89 aa). Residues 583-603 traverse the membrane as a helical segment; sequence LLLVVTSTACVVILPLICFLL. Topologically, residues 604–679 are cytoplasmic; that stretch reads YKVCKLQCKS…SEGSRPEYYC (76 aa).

Post-translationally, glycosylated. Detected in the outer plexiform layer (OPL) of the retina where it localizes to ON-bipolar cells (at protein level).

It localises to the cell projection. The protein localises to the dendrite. The protein resides in the perikaryon. It is found in the endoplasmic reticulum membrane. Functionally, plays a role in the synapse formation and synaptic transmission between cone photoreceptor cells and retinal bipolar cells. Required for normal transmission of a light-evoked stimulus from the cone photoreceptor cells to the ON-bipolar cells and ON-ganglion cells in the inner retina. Required in retinal ON-bipolar cells for normal localization of the cation channel TRPM1 at dendrite tips. Seems to play a specific role in synaptic contacts made by ON-bipolar cells with cone photoreceptor pedicles. May also have a role in cone synapse formation. Might facilitate FGFR1 exit from the endoplasmic reticulum to the Golgi. Could be a regulator of the FGFRs. This is Leucine-rich repeat, immunoglobulin-like domain and transmembrane domain-containing protein 3 (LRIT3) from Homo sapiens (Human).